The chain runs to 224 residues: MNCLTVPGVHPGSPGRPRGQIQVIFGPMFSGKSTELMRRVRRFQLAQYRCLLVKYAKDTRYCTTGVSTHDRNTMEARPACALQDVYQEALGSAVIGIDEGQFFPDIVEFCEKMANTGKTVIVAALDGTFQRKAFGSILNLVPLAESVVKLNAVCMECYREASYTKRLGAEREVEVIGGADKYHSVCRACYFQKRPQQLGSENKENVPMGVKQLDMPASRKIFAS.

At Ser13 the chain carries Phosphoserine. ATP is bound by residues 26–33 (GPMFSGKS), 58–60 (DTR), and 98–101 (DEGQ). Residue Glu99 is the Proton acceptor of the active site. A substrate-binding site is contributed by Phe129. Positions 154 and 157 each coordinate Zn(2+). Substrate-binding positions include 173 to 177 (VEVIG) and Tyr182. Zn(2+) contacts are provided by Cys186 and Cys189. The short motif at 203–205 (KEN) is the KEN box element.

The protein belongs to the thymidine kinase family. Homotetramer. Tetramerization from dimerization is induced by ATP and increases catalytic efficiency due to a high affinity for thymidine. Tetramerization is inhibited by phosphorylation at Ser-13. Interacts (via the KEN box) with FZR1. In terms of processing, phosphorylated on Ser-13 in mitosis. Phosphorylation of Ser-13 by CDK1 during mitosis reduces homotetramerization and catalytic efficiency when DNA replication is complete and intracellular TK1 is still present at a high level. Polyubiquitinated. Postmitosis, ubiquitination leads to proteasomal degradation. The KEN box sequence located at the C-terminal region targets for degradation by the anaphase promoting complex (APC/C) activated and rate-limited by FZR1.

It is found in the cytoplasm. It carries out the reaction thymidine + ATP = dTMP + ADP + H(+). In terms of biological role, cell-cycle-regulated enzyme of importance in nucleotide metabolism. Catalyzes the first enzymatic step in the salvage pathway converting thymidine into thymidine monophosphate. Transcriptional regulation limits expression to the S phase of the cell cycle and transient expression coincides with the oscillation in the intracellular dTTP concentration. The polypeptide is Thymidine kinase, cytosolic (TK1) (Gallus gallus (Chicken)).